Here is a 179-residue protein sequence, read N- to C-terminus: Large ribosomal subunit protein uL5 (179 aa).

This sequence belongs to the universal ribosomal protein uL5 family. In terms of assembly, part of the 50S ribosomal subunit; part of the 5S rRNA/L5/L18/L25 subcomplex. Contacts the 5S rRNA and the P site tRNA. Forms a bridge to the 30S subunit in the 70S ribosome.

In terms of biological role, this is one of the proteins that bind and probably mediate the attachment of the 5S RNA into the large ribosomal subunit, where it forms part of the central protuberance. In the 70S ribosome it contacts protein S13 of the 30S subunit (bridge B1b), connecting the 2 subunits; this bridge is implicated in subunit movement. Contacts the P site tRNA; the 5S rRNA and some of its associated proteins might help stabilize positioning of ribosome-bound tRNAs. This is Large ribosomal subunit protein uL5 from Nitratidesulfovibrio vulgaris (strain ATCC 29579 / DSM 644 / CCUG 34227 / NCIMB 8303 / VKM B-1760 / Hildenborough) (Desulfovibrio vulgaris).